Consider the following 1133-residue polypeptide: ATP-dependent DNA helicase homolog MER3 (1133 aa).

Residues Pro34–Lys229 form the Helicase ATP-binding domain. Ala47 to Thr54 lines the ATP pocket. Positions Asp165–His168 match the DEVH box motif. A Helicase C-terminal domain is found at Tyr263–Ile460. In terms of domain architecture, SEC63 spans Glu536 to His847. A disordered region spans residues Ala878–Val919. The span at Asn893 to Asp908 shows a compositional bias: basic and acidic residues. Positions Asp909–Val919 are enriched in acidic residues.

This sequence belongs to the helicase family. SKI2 subfamily. As to expression, expressed in meiocytes during meiosis.

The protein localises to the nucleus. It catalyses the reaction Couples ATP hydrolysis with the unwinding of duplex DNA by translocating in the 3'-5' direction.. The catalysed reaction is ATP + H2O = ADP + phosphate + H(+). In terms of biological role, DNA helicase required for crossover formation, complete synapsis of homologous chromosomes and bivalent formation during meiosis. Is specific to recombination events resulting in interference-sensitive crossovers (class I meiotic crossover). The chain is ATP-dependent DNA helicase homolog MER3 from Arabidopsis thaliana (Mouse-ear cress).